Here is a 98-residue protein sequence, read N- to C-terminus: Large ribosomal subunit protein bL21 (98 aa).

The protein belongs to the bacterial ribosomal protein bL21 family. In terms of assembly, part of the 50S ribosomal subunit. Contacts protein L20.

This protein binds to 23S rRNA in the presence of protein L20. In Aquifex aeolicus (strain VF5), this protein is Large ribosomal subunit protein bL21.